We begin with the raw amino-acid sequence, 140 residues long: Nucleoside diphosphate kinase (140 aa).

6 residues coordinate ATP: K11, F59, R87, T93, R104, and N114. H117 functions as the Pros-phosphohistidine intermediate in the catalytic mechanism.

The protein belongs to the NDK family. As to quaternary structure, homotetramer. Requires Mg(2+) as cofactor.

The protein localises to the cytoplasm. The catalysed reaction is a 2'-deoxyribonucleoside 5'-diphosphate + ATP = a 2'-deoxyribonucleoside 5'-triphosphate + ADP. The enzyme catalyses a ribonucleoside 5'-diphosphate + ATP = a ribonucleoside 5'-triphosphate + ADP. Functionally, major role in the synthesis of nucleoside triphosphates other than ATP. The ATP gamma phosphate is transferred to the NDP beta phosphate via a ping-pong mechanism, using a phosphorylated active-site intermediate. This is Nucleoside diphosphate kinase from Mesorhizobium japonicum (strain LMG 29417 / CECT 9101 / MAFF 303099) (Mesorhizobium loti (strain MAFF 303099)).